Consider the following 363-residue polypeptide: MSATFNFCAGPAMLPKPVMDKAQSELLDWNSMGTSVMEISHRSKEFIALTNQAEADLRQLMDIPANYHVLFMHGGGRGQFSAIANNFLGDKGRALYLVDGSWSSAAVEEAKKLVGEENIDTINIVENNNGINSVVLPSLSNIDKDYRYLHYCPNETVDGIEIFDTINSPWPVIADMSSNILSRKIDVNQFALIYAGAQKNIGPSGLSIVIVRNDMLSLPSLPQSSIMDYKLAVKHGSMYNTPPTFAWYLAAEVFAWLKVSGGVDSVELINIEKAMRLYQCIDELDFYKSGVAVENRSRMNVTFQLVNAELDNQFLEEAKQAGLVALKGHRSVGGMRASIYNAMPIEGVIELVKFMQTFAKKHS.

Arg-42 lines the L-glutamate pocket. Residues 76–77 (GR), Trp-102, Thr-156, Asp-175, and Gln-198 each bind pyridoxal 5'-phosphate. Position 199 is an N6-(pyridoxal phosphate)lysine (Lys-199). 240–241 (NT) provides a ligand contact to pyridoxal 5'-phosphate.

This sequence belongs to the class-V pyridoxal-phosphate-dependent aminotransferase family. SerC subfamily. In terms of assembly, homodimer. The cofactor is pyridoxal 5'-phosphate.

The protein localises to the cytoplasm. It carries out the reaction O-phospho-L-serine + 2-oxoglutarate = 3-phosphooxypyruvate + L-glutamate. It catalyses the reaction 4-(phosphooxy)-L-threonine + 2-oxoglutarate = (R)-3-hydroxy-2-oxo-4-phosphooxybutanoate + L-glutamate. The protein operates within amino-acid biosynthesis; L-serine biosynthesis; L-serine from 3-phospho-D-glycerate: step 2/3. Its pathway is cofactor biosynthesis; pyridoxine 5'-phosphate biosynthesis; pyridoxine 5'-phosphate from D-erythrose 4-phosphate: step 3/5. Functionally, catalyzes the reversible conversion of 3-phosphohydroxypyruvate to phosphoserine and of 3-hydroxy-2-oxo-4-phosphonooxybutanoate to phosphohydroxythreonine. In Shewanella piezotolerans (strain WP3 / JCM 13877), this protein is Phosphoserine aminotransferase.